The following is a 448-amino-acid chain: Trigger factor (448 aa).

A PPIase FKBP-type domain is found at 167 to 253 (GSIVRVDFVE…VKDIKRRDIP (87 aa)).

This sequence belongs to the FKBP-type PPIase family. Tig subfamily.

The protein localises to the cytoplasm. The catalysed reaction is [protein]-peptidylproline (omega=180) = [protein]-peptidylproline (omega=0). Its function is as follows. Involved in protein export. Acts as a chaperone by maintaining the newly synthesized protein in an open conformation. Functions as a peptidyl-prolyl cis-trans isomerase. This chain is Trigger factor, found in Borrelia recurrentis (strain A1).